Here is a 349-residue protein sequence, read N- to C-terminus: DNA integrity scanning protein DisA (349 aa).

Residues K3–E143 form the DAC domain. ATP contacts are provided by residues G70, V88, and T101–T105.

This sequence belongs to the DisA family. Homooctamer. Mg(2+) serves as cofactor.

The enzyme catalyses 2 ATP = 3',3'-c-di-AMP + 2 diphosphate. Its function is as follows. Participates in a DNA-damage check-point. DisA forms globular foci that rapidly scan along the chromosomes searching for lesions. Functionally, also has diadenylate cyclase activity, catalyzing the condensation of 2 ATP molecules into cyclic di-AMP (c-di-AMP). c-di-AMP likely acts as a signaling molecule that may couple DNA integrity with a cellular process. The protein is DNA integrity scanning protein DisA of Fusobacterium nucleatum subsp. nucleatum (strain ATCC 25586 / DSM 15643 / BCRC 10681 / CIP 101130 / JCM 8532 / KCTC 2640 / LMG 13131 / VPI 4355).